The primary structure comprises 162 residues: uncharacterized protein (162 aa).

A PUA domain is found at 78-154; sequence KNLVVVDIGA…KAIKNLHYVG (77 aa).

This is an uncharacterized protein from Methanocaldococcus jannaschii (strain ATCC 43067 / DSM 2661 / JAL-1 / JCM 10045 / NBRC 100440) (Methanococcus jannaschii).